The primary structure comprises 192 residues: MKLLEEFIQEKGTVLPGNVLKVDAFLNHQIDPVLMQAMGNEFAKRFQDLGITKIVTIESSGIAPAVFAGLALSVPVVFARKKKSVTLTDNLFTSTVYSYTKKESNDISVSKQFLTVDDTILVIDDFLANGQAALGLLEIAEHAGAKVAGIGIVIEKSFQQGRELLNKTGIPVYSLARIASLENEEILFLEEE.

Xanthine-binding residues include Leu20 and Asn27. A 5-phospho-alpha-D-ribose 1-diphosphate-binding site is contributed by 128 to 132 (ANGQA). Lys156 provides a ligand contact to xanthine.

It belongs to the purine/pyrimidine phosphoribosyltransferase family. Xpt subfamily. As to quaternary structure, homodimer.

The protein localises to the cytoplasm. The catalysed reaction is XMP + diphosphate = xanthine + 5-phospho-alpha-D-ribose 1-diphosphate. Its pathway is purine metabolism; XMP biosynthesis via salvage pathway; XMP from xanthine: step 1/1. Converts the preformed base xanthine, a product of nucleic acid breakdown, to xanthosine 5'-monophosphate (XMP), so it can be reused for RNA or DNA synthesis. This chain is Xanthine phosphoribosyltransferase, found in Listeria monocytogenes serotype 4b (strain CLIP80459).